A 290-amino-acid chain; its full sequence is Putative beta-lactamase HcpC (290 aa).

The N-terminal stretch at Met1–Ala25 is a signal peptide. TPR repeat units lie at residues Pro29 to Ser62, Cys64 to Asn98, Cys100 to Ala133, Glu134 to Asp170, Cys172 to Ser205, Pro206 to Gly242, and Cys244 to Gly278. Intrachain disulfides connect Cys56-Cys64, Cys92-Cys100, Cys128-Cys136, Cys164-Cys172, Cys200-Cys208, Cys236-Cys244, and Cys272-Cys280.

It belongs to the hcp beta-lactamase family.

The protein localises to the secreted. The catalysed reaction is a beta-lactam + H2O = a substituted beta-amino acid. May hydrolyze 6-aminopenicillinic acid and 7-aminocephalosporanic acid (ACA) derivatives. This chain is Putative beta-lactamase HcpC (hcpC), found in Helicobacter pylori (strain J99 / ATCC 700824) (Campylobacter pylori J99).